The chain runs to 1018 residues: MNEPGSTFGAGEAPEERLRALLQHVGHFLPAQGPIGVFVHHNTLHAFQHLPFHDALAAASALFEAEPYLSEAEFRAHIASGRIDDQDIEAALAERFAETPDERRGPLSRIEIERLALRFPIETATQAGLGWRIAETGATRELRPDLPSGPYHRLLVYTERWLAERPHAAARLLDQGGRDPESRAALALWDACRGVPLPPTEPAEPPLVDRVGVDRSHRDLLLAITGEDPAELIDPPFIRLLGAYLDEGVAHWAMPDRAQGLFRAFRGLVLEGSRPAGAHFAGLDAELRAIGANMPPAAVAVAALRDLGVAEQRWEGYVTRVLLELPGWAGMVHRFEHTPSDRPAGAPPASLLEYLAVRLTLARYALRDVARRRLGYRGPLAGLVEHARRAARPVEPPPRSPDGDRPFRLFQLAQLAGLSVAQIQPLSAADRVWALEVLEGLDEMARRRLLHEAYEHHHRVEVLHGIAANLRRPEDERAVRSPRFQVALCIDDRCEGLRRHFEELSPRHETLGIAGFFGVPIRYRGLDDAGHASLCPVNVAPAHEIVERPREEGAALVRKARRRRWARFVHALGHGTRTLSRGVLLTPTLGLFSTIPLVGRTLFPRAYARLRRAFERRLLPAVPTQLHSPHEEGTAQGRGGAAFTASEKAARVAATLEIMGLTRRFAPLVVMLGHGSISVNNPHQSAYDCGACGGRHGGPNARLFAAMANDREVRAQLRERGIDIPDGTFFLGGMNNTTTEEIVLYDDHLAPASHRGEIAALKDALGEARKRHAHERCRRFASAPARLSPEQALAHVEARAVDLSEARPELGHATNAVCVIGRRELTRGLFLDRRVFLVSYDPTQDPSGAILERVLLSAGPVGAGINLEYYFSRVDNLRYGAGTKLPHNLASLLGVMDGALSDLRTGLPKQMIEIHEPVRMLTVVETSTETAAAICARQPALRELIHNGWIQLACLDPATGQIARFTRGAFAPFTPPERPLPEVARSLDWYAGKSGFVPPAIIRATPSRPSLEIADHAA.

Residues Cys-489, Asp-491, His-674, and Cys-689 each contribute to the Zn(2+) site.

It belongs to the inorganic carbon transporter (TC 9.A.2) DabA family. As to quaternary structure, forms a complex with DabB. It depends on Zn(2+) as a cofactor.

Its subcellular location is the cell inner membrane. Part of an energy-coupled inorganic carbon pump. The chain is Probable inorganic carbon transporter subunit DabA 2 from Sorangium cellulosum (strain So ce56) (Polyangium cellulosum (strain So ce56)).